We begin with the raw amino-acid sequence, 112 residues long: MQNLASQIQEKAVDSQQQLRTIMVQIAAKERALKISELAKKELEDVGEDKAVYTSLGKMFMKSDLASVRTHLDAEMASLREDIEALQKKQTYHETTASNAEQHLQKIKESIS.

Belongs to the prefoldin subunit beta family. Heterohexamer of two PFD-alpha type and four PFD-beta type subunits.

In terms of biological role, binds specifically to cytosolic chaperonin (c-CPN) and transfers target proteins to it. Binds to nascent polypeptide chain and promotes folding in an environment in which there are many competing pathways for nonnative proteins. This chain is Probable prefoldin subunit 1, found in Schizosaccharomyces pombe (strain 972 / ATCC 24843) (Fission yeast).